The following is a 519-amino-acid chain: Sorting nexin-2 (519 aa).

2 disordered regions span residues 1-20 (MAAEREPPPLGDGKPTDFEE) and 30-103 (STVS…VTPV). Low complexity-rich tracts occupy residues 30 to 44 (STVSTLESSPSSPDP) and 93 to 103 (SSETSPAVTPV). A Phosphoserine modification is found at serine 97. 2 positions are modified to phosphothreonine: threonine 101 and threonine 104. Phosphoserine occurs at positions 117 and 119. One can recognise a PX domain in the interval 140–269 (FDIEIGVSDP…QFLESSELPR (130 aa)). Residues arginine 183, serine 185, lysine 211, and arginine 235 each contribute to the a 1,2-diacyl-sn-glycero-3-phospho-(1D-myo-inositol-3-phosphate) site. Residue serine 185 is modified to Phosphoserine. Positions 260-519 (QFLESSELPR…AFLPEAKAIA (260 aa)) are interaction with RhoG. The residue at position 277 (serine 277) is a Phosphoserine. The interval 278–295 (GAGILRMVNKAADAVNKM) is membrane-binding amphipathic helix. Residues 299-519 (MNESDAWFEE…AFLPEAKAIA (221 aa)) enclose the BAR domain. Position 469 is an N6-acetyllysine (lysine 469).

This sequence belongs to the sorting nexin family. In terms of assembly, predominantly forms heterodimers with BAR domain-containing sorting nexins SNX5, SNX6 and SNX32; can self-associate to form homodimers. The heterodimers are proposed to self-assemble into helical arrays on the membrane to stabilize and expand local membrane curvature underlying endosomal tubule formation. Thought to be a component of the originally described retromer complex (also called SNX-BAR retromer) which is a pentamer containing the heterotrimeric retromer cargo-selective complex (CSC), also decribed as vacuolar protein sorting subcomplex (VPS) and a heterodimeric membrane-deforming subcomplex formed between SNX1 or SNX2 and SNX5 or SNX6 (also called SNX-BAR subcomplex); the respective CSC and SNX-BAR subcomplexes associate with low affinity. Interacts with SNX5, SNX6, SNX32, VPS26A, VPS29, VPS35, FNBP1, KALRN, RHOG (GDP-bound form).

It localises to the early endosome membrane. The protein resides in the cell projection. Its subcellular location is the lamellipodium. Involved in several stages of intracellular trafficking. Interacts with membranes containing phosphatidylinositol 3-phosphate (PtdIns(3P)) or phosphatidylinositol 3,5-bisphosphate (PtdIns(3,5)P2). Acts in part as component of the retromer membrane-deforming SNX-BAR subcomplex. The SNX-BAR retromer mediates retrograde transport of cargo proteins from endosomes to the trans-Golgi network (TGN) and is involved in endosome-to-plasma membrane transport for cargo protein recycling. The SNX-BAR subcomplex functions to deform the donor membrane into a tubular profile called endosome-to-TGN transport carrier (ETC). Can sense membrane curvature and has in vitro vesicle-to-membrane remodeling activity. Required for retrograde endosome-to-TGN transport of TGN38. Promotes KALRN- and RHOG-dependent but retromer-independent membrane remodeling such as lamellipodium formation; the function is dependent on GEF activity of KALRN. This Bos taurus (Bovine) protein is Sorting nexin-2 (SNX2).